Consider the following 405-residue polypeptide: Nicotinate phosphoribosyltransferase (405 aa).

Residue His-224 is modified to Phosphohistidine; by autocatalysis.

It belongs to the NAPRTase family. In terms of processing, transiently phosphorylated on a His residue during the reaction cycle. Phosphorylation strongly increases the affinity for substrates and increases the rate of nicotinate D-ribonucleotide production. Dephosphorylation regenerates the low-affinity form of the enzyme, leading to product release.

It catalyses the reaction nicotinate + 5-phospho-alpha-D-ribose 1-diphosphate + ATP + H2O = nicotinate beta-D-ribonucleotide + ADP + phosphate + diphosphate. Its pathway is cofactor biosynthesis; NAD(+) biosynthesis; nicotinate D-ribonucleotide from nicotinate: step 1/1. Its function is as follows. Catalyzes the synthesis of beta-nicotinate D-ribonucleotide from nicotinate and 5-phospho-D-ribose 1-phosphate at the expense of ATP. The chain is Nicotinate phosphoribosyltransferase from Methanococcoides burtonii (strain DSM 6242 / NBRC 107633 / OCM 468 / ACE-M).